Reading from the N-terminus, the 211-residue chain is Bcl-2-related ovarian killer protein homolog B (211 aa).

The short motif at 32–44 is the BH4 element; the sequence is KELCRDFIHSRIT. The BH3 motif lies at 67–83; that stretch reads VSVVLLKLGDELECMRP. The short motif at 113 to 132 is the BH1 element; sequence EVIAMGITWGKVVAIYAVAA. Residues 165 to 179 carry the BH2 motif; it reads WLKKRGGWVDILKCV. The chain crosses the membrane as a helical span at residues 190 to 210; sequence WLSTAVLTWREFIKTMYVYLT.

This sequence belongs to the Bcl-2 family. As to expression, expressed strongly in ovary and more weakly in eye. Little expression in other tissues examined.

The protein localises to the membrane. Its function is as follows. May play a role in apoptosis. Does not appear to show pro-apoptotic activity when expressed ectopically in early embryos. In Danio rerio (Zebrafish), this protein is Bcl-2-related ovarian killer protein homolog B (bokb).